We begin with the raw amino-acid sequence, 468 residues long: Glycosyl hydrolase family 109 protein (468 aa).

A signal peptide spans 1–19; that stretch reads MVYKVFLSLCIGLALSASA. Residues 67 to 68, D89, 138 to 141, 158 to 159, and N187 each bind NAD(+); these read MR, WKTH, and EV. Residues Y216, R232, 244-247, and Y322 contribute to the substrate site; that span reads YATH. Y244 is an NAD(+) binding site.

It belongs to the Gfo/Idh/MocA family. Glycosyl hydrolase 109 subfamily. It depends on NAD(+) as a cofactor.

Glycosidase. This is Glycosyl hydrolase family 109 protein from Porphyromonas gingivalis (strain ATCC BAA-308 / W83).